Consider the following 265-residue polypeptide: Thymidylate synthase (265 aa).

DUMP is bound at residue Arg-21. Residue His-51 participates in (6R)-5,10-methylene-5,6,7,8-tetrahydrofolate binding. Residue 127-128 (RR) coordinates dUMP. The active-site Nucleophile is the Cys-147. Residues 167–170 (RSAD), Asn-178, and 208–210 (HLY) contribute to the dUMP site. Asp-170 contacts (6R)-5,10-methylene-5,6,7,8-tetrahydrofolate. (6R)-5,10-methylene-5,6,7,8-tetrahydrofolate is bound at residue Ser-264.

This sequence belongs to the thymidylate synthase family. Bacterial-type ThyA subfamily. As to quaternary structure, homodimer.

The protein localises to the cytoplasm. It carries out the reaction dUMP + (6R)-5,10-methylene-5,6,7,8-tetrahydrofolate = 7,8-dihydrofolate + dTMP. Its pathway is pyrimidine metabolism; dTTP biosynthesis. Its function is as follows. Catalyzes the reductive methylation of 2'-deoxyuridine-5'-monophosphate (dUMP) to 2'-deoxythymidine-5'-monophosphate (dTMP) while utilizing 5,10-methylenetetrahydrofolate (mTHF) as the methyl donor and reductant in the reaction, yielding dihydrofolate (DHF) as a by-product. This enzymatic reaction provides an intracellular de novo source of dTMP, an essential precursor for DNA biosynthesis. This chain is Thymidylate synthase, found in Neisseria gonorrhoeae.